Reading from the N-terminus, the 446-residue chain is tRNA modification GTPase MnmE (446 aa).

(6S)-5-formyl-5,6,7,8-tetrahydrofolate contacts are provided by arginine 23, glutamate 81, and lysine 120. Residues 216 to 370 form the TrmE-type G domain; it reads GFKVAIIGKP…LIKELELILD (155 aa). Asparagine 226 contributes to the K(+) binding site. Residues 226–231, 245–251, and 270–273 each bind GTP; these read NVGKSS, SDIAGTT, and DTAG. Serine 230 is a binding site for Mg(2+). Residues serine 245, isoleucine 247, and threonine 250 each contribute to the K(+) site. Threonine 251 contributes to the Mg(2+) binding site. Position 446 (lysine 446) interacts with (6S)-5-formyl-5,6,7,8-tetrahydrofolate.

Belongs to the TRAFAC class TrmE-Era-EngA-EngB-Septin-like GTPase superfamily. TrmE GTPase family. As to quaternary structure, homodimer. Heterotetramer of two MnmE and two MnmG subunits. K(+) serves as cofactor.

Its subcellular location is the cytoplasm. In terms of biological role, exhibits a very high intrinsic GTPase hydrolysis rate. Involved in the addition of a carboxymethylaminomethyl (cmnm) group at the wobble position (U34) of certain tRNAs, forming tRNA-cmnm(5)s(2)U34. This is tRNA modification GTPase MnmE from Aliarcobacter butzleri (strain RM4018) (Arcobacter butzleri).